The sequence spans 786 residues: Protein translocase subunit SecA 1 (786 aa).

ATP is bound by residues Q85, G103–T107, and D491.

This sequence belongs to the SecA family. In terms of assembly, monomer and homodimer. Part of the essential Sec protein translocation apparatus which comprises SecA, SecYEG and auxiliary proteins SecDF. Other proteins may also be involved.

The protein resides in the cell membrane. It is found in the cytoplasm. The enzyme catalyses ATP + H2O + cellular proteinSide 1 = ADP + phosphate + cellular proteinSide 2.. Its function is as follows. Part of the Sec protein translocase complex. Interacts with the SecYEG preprotein conducting channel. Has a central role in coupling the hydrolysis of ATP to the transfer of proteins into and across the cell membrane, serving as an ATP-driven molecular motor driving the stepwise translocation of polypeptide chains across the membrane. The protein is Protein translocase subunit SecA 1 of Pediococcus pentosaceus (strain ATCC 25745 / CCUG 21536 / LMG 10740 / 183-1w).